We begin with the raw amino-acid sequence, 378 residues long: Chlorophyll synthase, chloroplastic (378 aa).

The N-terminal 45 residues, 1–45 (MATSHPLAAAAATSSSSATFRPPLRFLSSPPSSLTLNRRRSFPVV), are a transit peptide targeting the chloroplast. 7 helical membrane passes run 173–193 (VITQ…LLDI), 199–219 (FPII…YSAP), 232–252 (FALG…LFGT), 257–277 (IVVL…VNDF), 302–322 (WICV…LLST), 327–347 (YALA…QYFL), and 357–377 (YQAS…LATS).

The protein belongs to the UbiA prenyltransferase family. Chlorophyll synthase subfamily. Requires Mg(2+) as cofactor. It depends on Zn(2+) as a cofactor. The cofactor is Mn(2+).

It is found in the plastid. The protein resides in the chloroplast membrane. It carries out the reaction phytyl diphosphate + chlorophyllide a + H(+) = chlorophyll a + diphosphate. Inhibited by N-phenylmaleimide (NPM) and diacetyl. Its function is as follows. Involved in one of the last steps of the biosynthesis of chlorophyll a. Catalyzes the esterification of chlorophillide a with either geranylgeranyldiphosphate (GGPP) or phytyldiphosphate (PhyPP). May also use with a lower efficiency the monophosphates GGMP and PhyMP, but not the non-phosphorylated alcohols geranylgeraniol and phytol. The tetraprenyl diphosphate must bind to the enzyme as the first substrate and esterification occurs when this pre-loaded enzyme meets the second substrate, chlorophyllide. The protein is Chlorophyll synthase, chloroplastic (CHLG) of Avena sativa (Oat).